The sequence spans 485 residues: NADH-quinone oxidoreductase subunit N (485 aa).

The next 14 helical transmembrane spans lie at 8-28, 35-55, 71-91, 105-125, 127-147, 159-179, 203-223, 235-255, 271-291, 297-317, 326-346, 373-393, 408-430, and 455-475; these read LIALLPLLIVGLTVVVVMLSI, FLNATLSVIGLNAALVSLWFV, GFAMLYTGLVLLASLATCTFA, FYLLVLIAALGGILLANANHL, SLFLGIELISLPLFGLVGYAF, YTILSAAASSFLLFGMALVYA, LLAGFGLMIVGLGFKLSLVPF, PAPVSTFLATASKIAIFGVVM, VVLAIIAFASIIFGNLMALSQ, LLGYSSISHLGYLLVALIALQ, VGVYLAGYLFSSLGAFGVVSL, AAVMTVMMLSLAGIPMTLGFI, WWLVGAVVVGSAIGLYYYLRVAV, and IVVLISALLVLVLGVWPQPLI.

The protein belongs to the complex I subunit 2 family. In terms of assembly, NDH-1 is composed of 13 different subunits. Subunits NuoA, H, J, K, L, M, N constitute the membrane sector of the complex.

It localises to the cell inner membrane. It carries out the reaction a quinone + NADH + 5 H(+)(in) = a quinol + NAD(+) + 4 H(+)(out). Functionally, NDH-1 shuttles electrons from NADH, via FMN and iron-sulfur (Fe-S) centers, to quinones in the respiratory chain. The immediate electron acceptor for the enzyme in this species is believed to be ubiquinone. Couples the redox reaction to proton translocation (for every two electrons transferred, four hydrogen ions are translocated across the cytoplasmic membrane), and thus conserves the redox energy in a proton gradient. The polypeptide is NADH-quinone oxidoreductase subunit N (Escherichia coli O139:H28 (strain E24377A / ETEC)).